A 238-amino-acid chain; its full sequence is Adenylate dimethylallyltransferase (238 aa).

The protein belongs to the isopentenyl transferase family.

It carries out the reaction dimethylallyl diphosphate + AMP = N(6)-(dimethylallyl)adenosine 5'-phosphate + diphosphate. Functionally, transfers dimethylallyl groups to AMP as part of the biosynthesis of cytokinin phytohormones. This Ralstonia nicotianae (strain ATCC BAA-1114 / GMI1000) (Ralstonia solanacearum) protein is Adenylate dimethylallyltransferase (tzs).